The following is a 228-amino-acid chain: Deoxyribose-phosphate aldolase (228 aa).

D93 acts as the Proton donor/acceptor in catalysis. The active-site Schiff-base intermediate with acetaldehyde is the K159. The active-site Proton donor/acceptor is the K188.

Belongs to the DeoC/FbaB aldolase family. DeoC type 1 subfamily.

It localises to the cytoplasm. It carries out the reaction 2-deoxy-D-ribose 5-phosphate = D-glyceraldehyde 3-phosphate + acetaldehyde. It functions in the pathway carbohydrate degradation; 2-deoxy-D-ribose 1-phosphate degradation; D-glyceraldehyde 3-phosphate and acetaldehyde from 2-deoxy-alpha-D-ribose 1-phosphate: step 2/2. In terms of biological role, catalyzes a reversible aldol reaction between acetaldehyde and D-glyceraldehyde 3-phosphate to generate 2-deoxy-D-ribose 5-phosphate. This Carboxydothermus hydrogenoformans (strain ATCC BAA-161 / DSM 6008 / Z-2901) protein is Deoxyribose-phosphate aldolase.